Consider the following 249-residue polypeptide: Methyl-coenzyme M reductase I subunit gamma (249 aa).

Position 120 (Arg120) interacts with coenzyme M.

The protein belongs to the methyl-coenzyme M reductase gamma subunit family. In terms of assembly, MCR is a hexamer of two alpha, two beta, and two gamma chains, forming a dimer of heterotrimers. Coenzyme F430 is required as a cofactor.

Its subcellular location is the cytoplasm. The enzyme catalyses coenzyme B + methyl-coenzyme M = methane + coenzyme M-coenzyme B heterodisulfide. It functions in the pathway one-carbon metabolism; methyl-coenzyme M reduction; methane from methyl-coenzyme M: step 1/1. Its activity is regulated as follows. Methyl-coenzyme M reductase activity is inhibited by 3-nitrooxypropanol (3-NOP) in vitro and in vivo, by oxidation of its active site Ni(I), which stops both growth and methanogenesis. Is also inhibited by the reaction product CoM-S-S-CoB. In terms of biological role, component of the methyl-coenzyme M reductase (MCR) I that catalyzes the reductive cleavage of methyl-coenzyme M (CoM-S-CH3 or 2-(methylthio)ethanesulfonate) using coenzyme B (CoB or 7-mercaptoheptanoylthreonine phosphate) as reductant which results in the production of methane and the mixed heterodisulfide of CoB and CoM (CoM-S-S-CoB). This is the final step in methanogenesis. Neither N-6-mercaptohexanoylthreonine phosphate (H-S-HxoTP) nor N-8-mercaptooctanoylthreonine phosphate (H-SOcoTP) nor any other thiol compound such as CoA or CoM can substitute for CoB as the electron donor. This is Methyl-coenzyme M reductase I subunit gamma (mcrG) from Methanothermobacter marburgensis (strain ATCC BAA-927 / DSM 2133 / JCM 14651 / NBRC 100331 / OCM 82 / Marburg) (Methanobacterium thermoautotrophicum).